Here is a 474-residue protein sequence, read N- to C-terminus: Probable aspartate--tRNA ligase, cytoplasmic (474 aa).

Position 203 (glutamate 203) interacts with L-aspartate. Residues 225-228 (QLYK) form an aspartate region. Arginine 247 serves as a coordination point for L-aspartate. ATP contacts are provided by residues 247–249 (RAE), 255–257 (RYL), and glutamate 397. L-aspartate is bound by residues serine 400 and arginine 404. Position 445-448 (445-448 (GLER)) interacts with ATP.

The protein belongs to the class-II aminoacyl-tRNA synthetase family. Type 2 subfamily. As to quaternary structure, homodimer.

It is found in the cytoplasm. The catalysed reaction is tRNA(Asp) + L-aspartate + ATP = L-aspartyl-tRNA(Asp) + AMP + diphosphate. The sequence is that of Probable aspartate--tRNA ligase, cytoplasmic from Enterocytozoon bieneusi (strain H348) (Microsporidian parasite).